The sequence spans 564 residues: Kelch repeat and BTB domain-containing protein 1 (564 aa).

Residues 21 to 88 enclose the BTB domain; it reads CDIDIVINDE…IYGIPLSLTN (68 aa). The BACK domain maps to 123–219; the sequence is CIDFYIYADK…SLLSPQVIKS (97 aa). Kelch repeat units lie at residues 252 to 297, 298 to 346, 347 to 395, 397 to 441, 442 to 492, and 494 to 539; these read IELI…VLDN, IIYM…ADDE, YIYC…MLNG, IYVI…VHAG, KIYI…SVHN, and LYVG…CEPI.

As to quaternary structure, interacts (via BTB domain) with host CUL3.

The protein resides in the host cytoplasm. Probable substrate-specific adapter of CUL3-containing E3 ubiquitin-protein ligases which mediate the ubiquitination and subsequent proteasomal degradation of host target proteins. The sequence is that of Kelch repeat and BTB domain-containing protein 1 (KBTB1) from Camelus.